Reading from the N-terminus, the 1338-residue chain is Nonribosomal peptide synthetase astA (1338 aa).

A disordered region spans residues Ile22–Leu52. The tract at residues Phe271–Arg681 is adenylation. A Carrier domain is found at Thr820–Gly893. Position 854 is an O-(pantetheine 4'-phosphoryl)serine (Ser854). Residues Thr949 to Ser1336 are condensation.

The protein belongs to the NRP synthetase family.

The catalysed reaction is 7beta,14,16-trihydroxyconfertifolin + benzoate + H(+) = dideacetyl astellolide A + H2O. It catalyses the reaction 7beta,14,16-trihydroxyconfertifolin + 4-hydroxybenzoate + H(+) = dideacetyl astellolide B + H2O. The protein operates within secondary metabolite biosynthesis; terpenoid biosynthesis. Nonribosomal peptide synthetase; part of the gene cluster that mediates the biosynthesis of astellolides, drimane-type sesquiterpene esters that show antimicrobial, anti-inflammatory, and anti-tumor activities. The first step in astellolide biosynthesis is performed by the sesquiterpene cyclase astC that catalyzes the formation of drimanyl pyrophosphate from farnesyl pyrophosphate. Drimanyl pyrophosphate is then dephosphorylated by the sesquiterpene phosphatase astI to produce drimanyl monophosphate which is further dephosphorylated to drim-8-ene-11-ol by atsK. Drim-8-ene-11-ol is converted to confertifolin, probably by the cytochrome P450 monooxygenase astD and/or the dehydrogenase astE. The cytochrome P450 monooxygenases astB, astF and astJ then hydroxylate confertifolin at C6, C14, or C15 to form trihydroxy confertifolin. The nonribosomal peptide synthetase astA catalyzes ester bond formation between trihydroxy contifolin and benzoic acid (BA) or 4-hydroxy benzoic acid (4HBA), leading to the formation of dideacetyl astellolides A and B, respectively. Finally, the O-acetyltransferase astG converts dideacetyl astellolides A and B into deacetyl astellolides A and B. This Aspergillus oryzae (strain ATCC 42149 / RIB 40) (Yellow koji mold) protein is Nonribosomal peptide synthetase astA.